The sequence spans 257 residues: Large ribosomal subunit protein uL3 (257 aa).

Q151 is modified (N5-methylglutamine). A disordered region spans residues 218–257; the sequence is YPASIKSAANTNTAPADAPVETPAEEAVVDTAATDGAQES. Positions 225–236 are enriched in low complexity; sequence AANTNTAPADAP.

The protein belongs to the universal ribosomal protein uL3 family. Part of the 50S ribosomal subunit. Forms a cluster with proteins L14 and L19. In terms of processing, methylated by PrmB.

Functionally, one of the primary rRNA binding proteins, it binds directly near the 3'-end of the 23S rRNA, where it nucleates assembly of the 50S subunit. This Sphingopyxis alaskensis (strain DSM 13593 / LMG 18877 / RB2256) (Sphingomonas alaskensis) protein is Large ribosomal subunit protein uL3.